Here is an 80-residue protein sequence, read N- to C-terminus: uncharacterized protein (80 aa).

It belongs to the 2-oxoacid dehydrogenase family.

This is an uncharacterized protein from Mycobacterium tuberculosis (strain CDC 1551 / Oshkosh).